The sequence spans 346 residues: Phosphoribosylformylglycinamidine cyclo-ligase (346 aa).

It belongs to the AIR synthase family.

It localises to the cytoplasm. It carries out the reaction 2-formamido-N(1)-(5-O-phospho-beta-D-ribosyl)acetamidine + ATP = 5-amino-1-(5-phospho-beta-D-ribosyl)imidazole + ADP + phosphate + H(+). It functions in the pathway purine metabolism; IMP biosynthesis via de novo pathway; 5-amino-1-(5-phospho-D-ribosyl)imidazole from N(2)-formyl-N(1)-(5-phospho-D-ribosyl)glycinamide: step 2/2. The polypeptide is Phosphoribosylformylglycinamidine cyclo-ligase (Vibrio campbellii (strain ATCC BAA-1116)).